The primary structure comprises 232 residues: Chaperone protein CssC (232 aa).

The N-terminal stretch at 1 to 20 is a signal peptide; sequence MKSKLIILLMLVPFSSFSTE.

The protein belongs to the periplasmic pilus chaperone family.

It is found in the periplasm. Its function is as follows. Involved in the biogenesis of the CS6 fimbria. This Escherichia coli protein is Chaperone protein CssC (cssC).